Consider the following 811-residue polypeptide: Protein kinase C-binding protein NELL2a (811 aa).

A signal peptide spans 1-18 (MAFLQLFVGLLCGAAVSA). Residues 54–225 (AFMFQGSSRS…TQCPDLNRTC (172 aa)) enclose the Laminin G-like domain. Asn222, Asn290, and Asn295 each carry an N-linked (GlcNAc...) asparagine glycan. Residues 269-328 (RTCRVKDQIYREEQSWTDGCKNCTCSNGTVRCEKILCPPLDCPDGTTPAYVTGTCCKECQ) enclose the VWFC 1 domain. The 43-residue stretch at 395–437 (GHDFCAEENICSENSDCVNLDAGASCGCKNGFRPLRLDSAYCE) folds into the EGF-like 1 domain. 3 cysteine pairs are disulfide-bonded: Cys399–Cys411, Cys405–Cys420, and Cys422–Cys436. Residues Asp438, Ile439, and Glu441 each coordinate Ca(2+). Positions 438 to 479 (DIDECAEGRHYCRENTECVNTAGSFMCVCHTGFIRIDDYSCT) constitute an EGF-like 2; calcium-binding domain. 9 disulfide bridges follow: Cys442–Cys455, Cys449–Cys464, Cys466–Cys478, Cys484–Cys497, Cys491–Cys506, Cys508–Cys519, Cys523–Cys533, Cys527–Cys539, and Cys541–Cys550. Ca(2+) is bound by residues Asn457, Thr458, and Ser461. Residues 480–520 (EHDECASGQHDCDENALCFNTVGGHSCSCKPGYSGNGTVCR) form the EGF-like 3; calcium-binding domain. Residue Asn515 is glycosylated (N-linked (GlcNAc...) asparagine). The EGF-like 4 domain maps to 521 to 551 (ALCDGRCLNGGSCASPNVCVCVQGFSGQNCE). Residues Asp553, Ile554, and Glu556 each coordinate Ca(2+). One can recognise an EGF-like 5; calcium-binding domain in the interval 553 to 592 (DIDECSEGLVQCAAHATCVNLPGWYHCECRDGYHDNEVFS). 3 disulfide bridges follow: Cys557/Cys570, Cys564/Cys579, and Cys581/Cys598. Ca(2+)-binding residues include Asn572, Leu573, and Trp576. Ca(2+)-binding residues include Asp600, Ile601, and Glu603. An EGF-like 6; calcium-binding domain is found at 600-635 (DIDECRTGRSTCANDTVCFNLDGGFDCRCPHGHNCS). 3 disulfides stabilise this stretch: Cys604–Cys617, Cys611–Cys626, and Cys628–Cys634. Asn613 carries an N-linked (GlcNAc...) asparagine glycan. 3 residues coordinate Ca(2+): Asn619, Leu620, and Gly623. The N-linked (GlcNAc...) asparagine glycan is linked to Asn633. 2 consecutive VWFC domains span residues 636 to 691 (GDCI…PECD) and 696 to 754 (SQCL…PRCV).

Homotrimer.

The protein resides in the secreted. In terms of biological role, may regulate neuronal differentiation, polarization and axon guidance. In Danio rerio (Zebrafish), this protein is Protein kinase C-binding protein NELL2a (nell2a).